The chain runs to 318 residues: uncharacterized protein (318 aa).

This sequence belongs to the NAD(P)-dependent epimerase/dehydratase family.

This is an uncharacterized protein from Staphylococcus epidermidis (strain ATCC 12228 / FDA PCI 1200).